A 338-amino-acid polypeptide reads, in one-letter code: Lipoate-protein ligase A (338 aa).

One can recognise a BPL/LPL catalytic domain in the interval 29-216 (PATQRVLFLW…AFFAHYGERV (188 aa)). ATP is bound by residues Arg71, 76–79 (GAVF), and Lys134. Residue Lys134 coordinates (R)-lipoate.

The protein belongs to the LplA family. In terms of assembly, monomer.

Its subcellular location is the cytoplasm. The catalysed reaction is L-lysyl-[lipoyl-carrier protein] + (R)-lipoate + ATP = N(6)-[(R)-lipoyl]-L-lysyl-[lipoyl-carrier protein] + AMP + diphosphate + H(+). It participates in protein modification; protein lipoylation via exogenous pathway; protein N(6)-(lipoyl)lysine from lipoate: step 1/2. The protein operates within protein modification; protein lipoylation via exogenous pathway; protein N(6)-(lipoyl)lysine from lipoate: step 2/2. Its function is as follows. Catalyzes both the ATP-dependent activation of exogenously supplied lipoate to lipoyl-AMP and the transfer of the activated lipoyl onto the lipoyl domains of lipoate-dependent enzymes. The chain is Lipoate-protein ligase A from Salmonella dublin (strain CT_02021853).